We begin with the raw amino-acid sequence, 358 residues long: MAIPLVLLLAWLLPTVFAASLTQVSNFGDNPGSLQMYIYVPNNLASKPAIIVAMHPCGGSATQYYGMYDYHTPADQYGYILIYPSATRDLNCFDADTAASLTHNGGSDSLSIVNMVKYTISKYGADSSKVYMTGSSSGAIMTNVLAGTYPDVFAAGAAFSGMPFACLSGAGGADPAMSNQTCSRGQINHTPQEWAAYVHNAYPGYTGQYPRLQVWHGTADNVISYTDFNQEISQWTTVMGLSFTSNQTNTPLSGYTKMIYGDGSRFQAFSASGVGHFVPTDVSVVLDWFGITGGGGGNGGGSGSTTTTTSATTTSTGPTGGCTAAHWDQCGGNGYTGCTSCASPYTCQKVNDYYSQCL.

The first 18 residues, 1–18, serve as a signal peptide directing secretion; sequence MAIPLVLLLAWLLPTVFA. Positions 19-291 are catalytic; it reads ASLTQVSNFG…VSVVLDWFGI (273 aa). Ser136 (charge relay system) is an active-site residue. Residues Asn179 and Asn246 are each glycosylated (N-linked (GlcNAc...) asparagine). The interval 292–321 is gly/Thr-rich linker; that stretch reads TGGGGGNGGGSGSTTTTTSATTTSTGPTGG. The segment at 297 to 318 is disordered; it reads GNGGGSGSTTTTTSATTTSTGP. Residues 304-318 show a composition bias toward low complexity; sequence STTTTTSATTTSTGP. One can recognise a CBM1 domain in the interval 322–358; it reads CTAAHWDQCGGNGYTGCTSCASPYTCQKVNDYYSQCL.

Belongs to the carbohydrate esterase 1 (CE1) family. Feruloyl esterase type B subfamily.

The protein localises to the secreted. It carries out the reaction feruloyl-polysaccharide + H2O = ferulate + polysaccharide.. Its function is as follows. Involved in degradation of plant cell walls. Hydrolyzes the feruloyl-arabinose ester bond in arabinoxylans as well as the feruloyl-galactose and feruloyl-arabinose ester bonds in pectin. Active against methyl esters of caffeate (MCA), but not sinapate (MSA). This chain is Feruloyl esterase B (faeB), found in Talaromyces stipitatus (strain ATCC 10500 / CBS 375.48 / QM 6759 / NRRL 1006) (Penicillium stipitatum).